The sequence spans 225 residues: MADS-box transcription factor 5 (225 aa).

Residues 1–61 enclose the MADS-box domain; sequence MGRGKVELKR…GRLFEFSTSS (61 aa). The region spanning 89 to 179 is the K-box domain; the sequence is ELSNYQEYLK…KRKIQETSGE (91 aa).

As to quaternary structure, may interact with the K-box of MADS6.

It localises to the nucleus. Functionally, probable transcription factor. The protein is MADS-box transcription factor 5 (MADS5) of Oryza sativa subsp. indica (Rice).